The sequence spans 682 residues: Methionine--tRNA ligase (682 aa).

The short motif at 15 to 25 (PYANGAIHLGH) is the 'HIGH' region element. Zn(2+) contacts are provided by Cys-146, Cys-149, Cys-159, and Cys-162. Positions 331-335 (KMSKS) match the 'KMSKS' region motif. Lys-334 is an ATP binding site. Residues 580 to 682 (DFAKLDMRVA…SGVTAGMQVK (103 aa)) form the tRNA-binding domain.

It belongs to the class-I aminoacyl-tRNA synthetase family. MetG type 1 subfamily. Homodimer. Zn(2+) serves as cofactor.

The protein localises to the cytoplasm. It carries out the reaction tRNA(Met) + L-methionine + ATP = L-methionyl-tRNA(Met) + AMP + diphosphate. Its function is as follows. Is required not only for elongation of protein synthesis but also for the initiation of all mRNA translation through initiator tRNA(fMet) aminoacylation. The chain is Methionine--tRNA ligase from Haemophilus influenzae (strain ATCC 51907 / DSM 11121 / KW20 / Rd).